The chain runs to 739 residues: Phosphoribosylformylglycinamidine synthase subunit PurL (739 aa).

The active site involves H54. The ATP site is built by Y57 and K96. E98 is a binding site for Mg(2+). Substrate is bound by residues S99–H102 and R121. Residue H100 is the Proton acceptor of the active site. D122 provides a ligand contact to Mg(2+). Q245 serves as a coordination point for substrate. Residue D273 participates in Mg(2+) binding. Residue E317–Q319 participates in substrate binding. Positions 500 and 537 each coordinate ATP. Position 538 (N538) interacts with Mg(2+). S540 contacts substrate.

This sequence belongs to the FGAMS family. In terms of assembly, monomer. Part of the FGAM synthase complex composed of 1 PurL, 1 PurQ and 2 PurS subunits.

It localises to the cytoplasm. It catalyses the reaction N(2)-formyl-N(1)-(5-phospho-beta-D-ribosyl)glycinamide + L-glutamine + ATP + H2O = 2-formamido-N(1)-(5-O-phospho-beta-D-ribosyl)acetamidine + L-glutamate + ADP + phosphate + H(+). It functions in the pathway purine metabolism; IMP biosynthesis via de novo pathway; 5-amino-1-(5-phospho-D-ribosyl)imidazole from N(2)-formyl-N(1)-(5-phospho-D-ribosyl)glycinamide: step 1/2. In terms of biological role, part of the phosphoribosylformylglycinamidine synthase complex involved in the purines biosynthetic pathway. Catalyzes the ATP-dependent conversion of formylglycinamide ribonucleotide (FGAR) and glutamine to yield formylglycinamidine ribonucleotide (FGAM) and glutamate. The FGAM synthase complex is composed of three subunits. PurQ produces an ammonia molecule by converting glutamine to glutamate. PurL transfers the ammonia molecule to FGAR to form FGAM in an ATP-dependent manner. PurS interacts with PurQ and PurL and is thought to assist in the transfer of the ammonia molecule from PurQ to PurL. The sequence is that of Phosphoribosylformylglycinamidine synthase subunit PurL from Bacillus anthracis (strain A0248).